The primary structure comprises 336 residues: Holliday junction branch migration complex subunit RuvB (336 aa).

The segment at 4 to 184 (ADRLVAPGSI…FGIVQRLEFY (181 aa)) is large ATPase domain (RuvB-L). Residues I23, R24, G65, K68, T69, T70, 131–133 (EDY), R174, Y184, and R221 each bind ATP. T69 is a Mg(2+) binding site. Residues 185-255 (QVADLQHIVS…VASQALDMLN (71 aa)) are small ATPAse domain (RuvB-S). The tract at residues 258–336 (AEGFDYMDRK…HFGITPPQMP (79 aa)) is head domain (RuvB-H). DNA contacts are provided by R294, R313, and R318.

This sequence belongs to the RuvB family. As to quaternary structure, homohexamer. Forms an RuvA(8)-RuvB(12)-Holliday junction (HJ) complex. HJ DNA is sandwiched between 2 RuvA tetramers; dsDNA enters through RuvA and exits via RuvB. An RuvB hexamer assembles on each DNA strand where it exits the tetramer. Each RuvB hexamer is contacted by two RuvA subunits (via domain III) on 2 adjacent RuvB subunits; this complex drives branch migration. In the full resolvosome a probable DNA-RuvA(4)-RuvB(12)-RuvC(2) complex forms which resolves the HJ.

It is found in the cytoplasm. It carries out the reaction ATP + H2O = ADP + phosphate + H(+). In terms of biological role, the RuvA-RuvB-RuvC complex processes Holliday junction (HJ) DNA during genetic recombination and DNA repair, while the RuvA-RuvB complex plays an important role in the rescue of blocked DNA replication forks via replication fork reversal (RFR). RuvA specifically binds to HJ cruciform DNA, conferring on it an open structure. The RuvB hexamer acts as an ATP-dependent pump, pulling dsDNA into and through the RuvAB complex. RuvB forms 2 homohexamers on either side of HJ DNA bound by 1 or 2 RuvA tetramers; 4 subunits per hexamer contact DNA at a time. Coordinated motions by a converter formed by DNA-disengaged RuvB subunits stimulates ATP hydrolysis and nucleotide exchange. Immobilization of the converter enables RuvB to convert the ATP-contained energy into a lever motion, pulling 2 nucleotides of DNA out of the RuvA tetramer per ATP hydrolyzed, thus driving DNA branch migration. The RuvB motors rotate together with the DNA substrate, which together with the progressing nucleotide cycle form the mechanistic basis for DNA recombination by continuous HJ branch migration. Branch migration allows RuvC to scan DNA until it finds its consensus sequence, where it cleaves and resolves cruciform DNA. The protein is Holliday junction branch migration complex subunit RuvB of Cronobacter sakazakii (strain ATCC BAA-894) (Enterobacter sakazakii).